We begin with the raw amino-acid sequence, 1291 residues long: Vacuolating cytotoxin autotransporter (1291 aa).

An N-terminal signal peptide occupies residues 1-33; it reads MEIQQTHRKINRPLVSLALVGALVSITPQQSHA. The interval 326–374 is disordered; the sequence is PPEGGYKDKPNDKPSNTTQNNAKNDKQESSQNNSNTQVINPPNSAQKTE. Composition is skewed to polar residues over residues 338-347 and 354-374; these read KPSNTTQNNA and SSQN…QKTE. In terms of domain architecture, Autotransporter spans 1018 to 1291; the sequence is KYEKPTNVWA…ASNLGMRYSF (274 aa).

It localises to the periplasm. The protein resides in the secreted. Its subcellular location is the cell surface. The protein localises to the cell outer membrane. Its function is as follows. Induces vacuolation of eukaryotic cells. Causes ulceration and gastric lesions. The chain is Vacuolating cytotoxin autotransporter (vacA) from Helicobacter pylori (Campylobacter pylori).